A 513-amino-acid chain; its full sequence is Cytochrome P450 1A2 (513 aa).

Residue Ser68 is glycosylated (O-linked (GlcNAc) serine). Position 456 (Cys456) interacts with heme.

Belongs to the cytochrome P450 family. Interacts with PGRMC1; the interaction requires PGRMC1 homodimerization. Requires heme as cofactor.

The protein localises to the endoplasmic reticulum membrane. It is found in the microsome membrane. It catalyses the reaction an organic molecule + reduced [NADPH--hemoprotein reductase] + O2 = an alcohol + oxidized [NADPH--hemoprotein reductase] + H2O + H(+). The catalysed reaction is 17beta-estradiol + reduced [NADPH--hemoprotein reductase] + O2 = 2-hydroxy-17beta-estradiol + oxidized [NADPH--hemoprotein reductase] + H2O + H(+). It carries out the reaction 17beta-estradiol + reduced [NADPH--hemoprotein reductase] + O2 = 4-hydroxy-17beta-estradiol + oxidized [NADPH--hemoprotein reductase] + H2O + H(+). The enzyme catalyses estrone + reduced [NADPH--hemoprotein reductase] + O2 = 2-hydroxyestrone + oxidized [NADPH--hemoprotein reductase] + H2O + H(+). It catalyses the reaction estrone + reduced [NADPH--hemoprotein reductase] + O2 = 4-hydroxyestrone + oxidized [NADPH--hemoprotein reductase] + H2O + H(+). The catalysed reaction is cholesterol + reduced [NADPH--hemoprotein reductase] + O2 = 25-hydroxycholesterol + oxidized [NADPH--hemoprotein reductase] + H2O + H(+). It carries out the reaction all-trans-retinol + reduced [NADPH--hemoprotein reductase] + O2 = all-trans-retinal + oxidized [NADPH--hemoprotein reductase] + 2 H2O + H(+). The enzyme catalyses all-trans-retinal + reduced [NADPH--hemoprotein reductase] + O2 = all-trans-retinoate + oxidized [NADPH--hemoprotein reductase] + H2O + 2 H(+). It catalyses the reaction (5Z,8Z,11Z,14Z)-eicosatetraenoate + reduced [NADPH--hemoprotein reductase] + O2 = (14R,15S)-epoxy-(5Z,8Z,11Z)-eicosatrienoate + oxidized [NADPH--hemoprotein reductase] + H2O + H(+). The catalysed reaction is (5Z,8Z,11Z,14Z)-eicosatetraenoate + reduced [NADPH--hemoprotein reductase] + O2 = (14S,15R)-epoxy-(5Z,8Z,11Z)-eicosatrienoate + oxidized [NADPH--hemoprotein reductase] + H2O + H(+). It carries out the reaction (5Z,8Z,11Z,14Z,17Z)-eicosapentaenoate + reduced [NADPH--hemoprotein reductase] + O2 = (17R,18S)-epoxy-(5Z,8Z,11Z,14Z)-eicosatetraenoate + oxidized [NADPH--hemoprotein reductase] + H2O + H(+). The enzyme catalyses (4Z,7Z,10Z,13Z,16Z,19Z)-docosahexaenoate + reduced [NADPH--hemoprotein reductase] + O2 = (19R,20S)-epoxy-(4Z,7Z,10Z,13Z,16Z)-docosapentaenoate + oxidized [NADPH--hemoprotein reductase] + H2O + H(+). It catalyses the reaction (5S)-hydroperoxy-(6E,8Z,11Z,14Z)-eicosatetraenoate = 5-oxo-(6E,8Z,11Z,14Z)-eicosatetraenoate + H2O. The catalysed reaction is (12S)-hydroperoxy-(5Z,8Z,10E,14Z)-eicosatetraenoate = 12-oxo-(5Z,8Z,10E,14Z)-eicosatetraenoate + H2O. It carries out the reaction (15S)-hydroperoxy-(5Z,8Z,11Z,13E)-eicosatetraenoate = 15-oxo-(5Z,8Z,11Z,13E)-eicosatetraenoate + H2O. The enzyme catalyses (13S)-hydroperoxy-(9Z,11E)-octadecadienoate = 13-oxo-(9Z,11E)-octadecadienoate + H2O. It catalyses the reaction (5Z,8Z,11Z,14Z)-eicosatetraenoate + reduced [NADPH--hemoprotein reductase] + O2 = 13-hydroxy-(5Z,8Z,11Z,14Z)-eicosatetraenoate + oxidized [NADPH--hemoprotein reductase] + H2O + H(+). The catalysed reaction is (5Z,8Z,11Z,14Z)-eicosatetraenoate + reduced [NADPH--hemoprotein reductase] + O2 = 19-hydroxy-(5Z,8Z,11Z,14Z)-eicosatetraenoate + oxidized [NADPH--hemoprotein reductase] + H2O + H(+). It carries out the reaction (9Z,12Z)-octadecadienoate + reduced [NADPH--hemoprotein reductase] + O2 = 11-hydroxy-(9Z,12Z)-octadecadienoate + oxidized [NADPH--hemoprotein reductase] + H2O + H(+). It participates in cofactor metabolism; retinol metabolism. It functions in the pathway steroid metabolism; cholesterol metabolism. The protein operates within lipid metabolism; arachidonate metabolism. Functionally, a cytochrome P450 monooxygenase involved in the metabolism of various endogenous substrates, including fatty acids, steroid hormones and vitamins. Mechanistically, uses molecular oxygen inserting one oxygen atom into a substrate, and reducing the second into a water molecule, with two electrons provided by NADPH via cytochrome P450 reductase (NADPH--hemoprotein reductase). Catalyzes the hydroxylation of carbon-hydrogen bonds. Exhibits high catalytic activity for the formation of hydroxyestrogens from estrone (E1) and 17beta-estradiol (E2), namely 2-hydroxy E1 and E2. Metabolizes cholesterol toward 25-hydroxycholesterol, a physiological regulator of cellular cholesterol homeostasis. May act as a major enzyme for all-trans retinoic acid biosynthesis in the liver. Catalyzes two successive oxidative transformation of all-trans retinol to all-trans retinal and then to the active form all-trans retinoic acid. Primarily catalyzes stereoselective epoxidation of the last double bond of polyunsaturated fatty acids (PUFA), displaying a strong preference for the (R,S) stereoisomer. Catalyzes bisallylic hydroxylation and omega-1 hydroxylation of PUFA. May also participate in eicosanoids metabolism by converting hydroperoxide species into oxo metabolites (lipoxygenase-like reaction, NADPH-independent). Plays a role in the oxidative metabolism of xenobiotics. Catalyzes the N-hydroxylation of heterocyclic amines and the O-deethylation of phenacetin. Metabolizes caffeine via N3-demethylation. The chain is Cytochrome P450 1A2 (Cyp1a2) from Rattus norvegicus (Rat).